The following is a 1402-amino-acid chain: Erbin (1402 aa).

LRR repeat units lie at residues Thr-23–Phe-44, Thr-47–Cys-68, Ser-70–Leu-91, Asn-93–Cys-114, Val-116–Leu-137, Asn-139–Thr-161, Lys-162–Leu-183, Gln-185–Leu-206, Gly-208–Leu-229, Gln-231–Cys-252, Asn-254–Leu-275, Asn-277–Leu-298, Ser-300–Leu-321, Asn-323–Trp-344, Asn-346–Met-367, Lys-369–Gln-391, and Gln-392–Thr-413. Ser-440 and Ser-444 each carry phosphoserine. Disordered stretches follow at residues Asp-465–Asp-489 and Asp-507–Ser-543. The span at Glu-470–Leu-480 shows a compositional bias: basic and acidic residues. Tyr-483 bears the Phosphotyrosine mark. The residue at position 485 (Thr-485) is a Phosphothreonine. Residues Asp-507 to Lys-534 are compositionally biased toward basic and acidic residues. A phosphoserine mark is found at Ser-595, Ser-599, Ser-600, and Ser-617. Residues Asn-629 to Asp-638 are compositionally biased toward basic and acidic residues. The disordered stretch occupies residues Asn-629–Gln-694. The segment covering Asn-647–Ser-659 has biased composition (low complexity). The segment covering Arg-660–Asn-689 has biased composition (polar residues). Ser-712, Ser-849, Ser-854, and Ser-869 each carry phosphoserine. Residues Glu-824 to Val-864 form a disordered region. A Phosphothreonine modification is found at Thr-914. The residue at position 917 (Tyr-917) is a Phosphotyrosine. Ser-928 carries the post-translational modification Phosphoserine. The residue at position 970 (Tyr-970) is a Phosphotyrosine. 2 disordered regions span residues Trp-990 to Ser-1018 and Thr-1070 to Thr-1093. Polar residues predominate over residues Thr-1070–Val-1084. A Phosphotyrosine modification is found at Tyr-1097. Disordered regions lie at residues Gly-1107–Asp-1187, Ala-1198–Asp-1217, and Glu-1222–His-1274. 2 stretches are compositionally biased toward polar residues: residues Gly-1128 to Pro-1139 and Met-1149 to Arg-1164. 2 positions are modified to phosphoserine: Ser-1150 and Ser-1171. Leu-1231, Arg-1234, and Ser-1276 each carry phosphoserine. Residues Glu-1311–Val-1400 enclose the PDZ domain.

Belongs to the LAP (LRR and PDZ) protein family. In terms of assembly, interacts with ERBB2, BPAG1 and ITGB4. May favor the localization of ERBB2, by restricting its presence to the basolateral membrane of epithelial cells. Also found to interact with ARVCF and delta catenin. Interacts (via C-terminus) with DST (via N-terminus). Interacts with NOD2 (via CARD domain). Post-translationally, isoform 2 is phosphorylated on Ser-1231 and Ser-1234.

It localises to the cell junction. Its subcellular location is the hemidesmosome. The protein localises to the nucleus membrane. It is found in the basolateral cell membrane. Acts as an adapter for the receptor ERBB2, in epithelia. By binding the unphosphorylated ERBB2 'Tyr-1248' receptor, it may contribute to stabilize this unphosphorylated state. Inhibits NOD2-dependent NF-kappa-B signaling and pro-inflammatory cytokine secretion. The polypeptide is Erbin (Mus musculus (Mouse)).